A 60-amino-acid chain; its full sequence is Temporin-MT5 (60 aa).

The first 22 residues, 1 to 22 (MFTLKKPLLLLFFLATINLSLC), serve as a signal peptide directing secretion. The propeptide at 23-44 (EQERNAEEERRDEPDERNAEVE) is removed in mature form. A Phenylalanine amide modification is found at Phe-58.

This sequence belongs to the frog skin active peptide (FSAP) family. Temporin subfamily. Expressed by the skin glands.

It is found in the secreted. In terms of biological role, antimicrobial peptide. The chain is Temporin-MT5 from Amolops mantzorum (Sichuan torrent frog).